The following is a 403-amino-acid chain: CinA-like protein (403 aa).

It belongs to the CinA family.

This is CinA-like protein from Petrotoga mobilis (strain DSM 10674 / SJ95).